Reading from the N-terminus, the 273-residue chain is Undecaprenyl-diphosphatase (273 aa).

7 consecutive transmembrane segments (helical) span residues glycine 13–asparagine 35, valine 45–tyrosine 62, phenylalanine 82–lysine 102, leucine 108–valine 128, threonine 186–leucine 206, leucine 219–leucine 239, and phenylalanine 250–isoleucine 270.

This sequence belongs to the UppP family.

It is found in the cell inner membrane. It catalyses the reaction di-trans,octa-cis-undecaprenyl diphosphate + H2O = di-trans,octa-cis-undecaprenyl phosphate + phosphate + H(+). In terms of biological role, catalyzes the dephosphorylation of undecaprenyl diphosphate (UPP). Confers resistance to bacitracin. This is Undecaprenyl-diphosphatase from Neisseria meningitidis serogroup A / serotype 4A (strain DSM 15465 / Z2491).